Here is a 195-residue protein sequence, read N- to C-terminus: Peptidyl-tRNA hydrolase (195 aa).

Y18 is a binding site for tRNA. The Proton acceptor role is filled by H23. 3 residues coordinate tRNA: F69, N71, and N117.

The protein belongs to the PTH family. In terms of assembly, monomer.

It localises to the cytoplasm. It carries out the reaction an N-acyl-L-alpha-aminoacyl-tRNA + H2O = an N-acyl-L-amino acid + a tRNA + H(+). Its function is as follows. Hydrolyzes ribosome-free peptidyl-tRNAs (with 1 or more amino acids incorporated), which drop off the ribosome during protein synthesis, or as a result of ribosome stalling. In terms of biological role, catalyzes the release of premature peptidyl moieties from peptidyl-tRNA molecules trapped in stalled 50S ribosomal subunits, and thus maintains levels of free tRNAs and 50S ribosomes. The sequence is that of Peptidyl-tRNA hydrolase from Alcanivorax borkumensis (strain ATCC 700651 / DSM 11573 / NCIMB 13689 / SK2).